We begin with the raw amino-acid sequence, 1046 residues long: MPMDQSISSPLFPMEKDIDIPLDATPLAQSSSLQLFIHLAEPVVFLQGFDPQKTEYPSVVLRGCLVVRILKPTKLKSISLSFKGYSRTEWPEGIPPKRQEFVEIKDIVDHTWALYPPTEQKSKKKMDASAPNESNNAANNFLTKESGASLYRTLSDNETITSRKNSISGLSSLNLSPLGAPGNSSVNVKDRESRQRSRSSSVTSSNGPSRNLSPINLLKRATSPSVSHHNYKPTTTSIFSDLLNNTFTHNDAASHHGHHIPTSSNHLAMTSNNFTSGSGGEFFVFQPGDYIYAFEELIPQAYPESIKADFGFVEYFLFASIERPGAFKSNISARQVVNIVRTQAHNSVEESEPIIISRDWENQLYYDIVIASKDIILDAFLPITFKFAPLDKVTLHRIRIYVTETMEYYCREKKVHRMEPTKKFLLTEQKGPKLPNLPNDANLSKAKNMGNLLQDPKNGDLVNKEYEYQIFIPSRFNNHQQLHPDTSYENIKANHWIKICLRLSRVVDNKRKHYEISIDSPIHVLHRLCSHANTLLPSYDGHPASFPKETDSSISSILESSDDNINLYHNSNIFFPKEVLSSPVLSPNVQPLDILIPHLPSTSLTRNSRQFNRNSKSHPSDNTIFNSAKLKSNIYQPESLQRELASPQAIPLSPITSPMSNMEVPPPDFDFSSDFISDAASGTTTTEVSSSESSILPRDPPSYKDTVLHDNNQKRRPNSKHPTPPSLKASHPNKNSDKNSSETLNKKESMSKIEENKHKRETTPKKRENRDVKSLSTPQREESKDSTSTGNQSNEKNRKRVLSLSSSLHSSPNNSGFAHSALGNLSNESLRSLNRRESVQDNLPSTIRHDNPFFTDLNQVLIEDELKNHDKNELNRHSTNTSSTPASARSSFDYSGINISKDKLNMEPLLSKTETLTNKVNEDSFLRPNDSYVDLLEPSVDTTIDITAPYARNSSAWHPLQNDNDNNQFSPLLGSNENFLNAANAQNSAESDHNNDIFTQGSGLTESSKNSDSEERFISRLSSPEKVLINTLDNESGLQSINESTL.

The tract at residues 115–141 (YPPTEQKSKKKMDASAPNESNNAANNF) is disordered. Positions 128-140 (ASAPNESNNAANN) are enriched in low complexity. Residues Ser155 and Ser162 each carry the phosphoserine modification. 2 stretches are compositionally biased toward low complexity: residues 168–179 (SGLSSLNLSPLG) and 198–210 (RSSSVTSSNGPSR). The interval 168-230 (SGLSSLNLSP…ATSPSVSHHN (63 aa)) is disordered. 2 positions are modified to phosphoserine: Ser213 and Ser586. A compositionally biased stretch (polar residues) spans 605–614 (TRNSRQFNRN). 2 disordered regions span residues 605–627 (TRNSRQFNRNSKSHPSDNTIFNS) and 651–820 (PLSP…FAHS). The segment covering 669–694 (FDFSSDFISDAASGTTTTEVSSSESS) has biased composition (low complexity). Residues 734 to 785 (KNSDKNSSETLNKKESMSKIEENKHKRETTPKKRENRDVKSLSTPQREESKD) are compositionally biased toward basic and acidic residues. A compositionally biased stretch (low complexity) spans 802–811 (LSLSSSLHSS). A phosphoserine mark is found at Ser826 and Ser838. Residues 868–889 (NHDKNELNRHSTNTSSTPASAR) are disordered. Residues 877–889 (HSTNTSSTPASAR) are compositionally biased toward polar residues. Ser900 is modified (phosphoserine). A disordered region spans residues 986-1017 (QNSAESDHNNDIFTQGSGLTESSKNSDSEERF). Positions 996-1008 (DIFTQGSGLTESS) are enriched in polar residues. 2 positions are modified to phosphoserine: Ser1022 and Ser1023.

Belongs to the ALY1 family. Interacts with PCL6, PCL7 and RSP5. In terms of processing, ubiquitinated by RSP5. Post-translationally, phosphorylated by the cyclin-CDKs PCL6-PHO85 and PCL7-PHO85.

The protein resides in the cytoplasm. Functionally, may regulate endocytosis by recruiting RSP5 ubiquitin ligase activity to specific plasma membrane proteins in response to extracellular stimuli. The sequence is that of Arrestin-related trafficking adapter 3 (ALY2) from Saccharomyces cerevisiae (strain ATCC 204508 / S288c) (Baker's yeast).